The following is a 1630-amino-acid chain: Transient receptor potential cation channel subfamily M member 1 (1630 aa).

Disordered regions lie at residues 1–25 (MGSMRKMSSSFKRGSIKSSTSGSQK), 65–92 (PLPSVTPSSTAEDTKQGDAQSGKWSVSK), 453–492 (APPVDTKVAEKEKKPPTATTKGRGKGKGKKKGKVKEEVEE), 620–643 (LGMEDDEPPAKGKKKKKKKKEEEI), and 824–858 (SKENEDGKEKEEENVDANADAGSRKGDEENEHKKQ). Residues 1-877 (MGSMRKMSSS…CEFYNAPIVK (877 aa)) lie on the Cytoplasmic side of the membrane. A compositionally biased stretch (low complexity) spans 8–25 (SSSFKRGSIKSSTSGSQK). The segment covering 69 to 92 (VTPSSTAEDTKQGDAQSGKWSVSK) has biased composition (polar residues). The span at 474-485 (GRGKGKGKKKGK) shows a compositional bias: basic residues. Basic and acidic residues-rich tracts occupy residues 825–834 (KENEDGKEKE) and 845–855 (GSRKGDEENEH). Residues 878-898 (FWFYTISYLGYLLLFNYVILV) form a helical membrane-spanning segment. Topologically, residues 899 to 944 (RMDGWPSPQEWIVISYIVSLALEKIREILMSEPGKLSQKIKVWLQE) are extracellular. Residues 945–965 (YWNITDLVAISMFMVGAILRL) traverse the membrane as a helical segment. Residues 966-975 (QNQPYMGYGR) lie on the Cytoplasmic side of the membrane. Residues 976 to 996 (VIYCVDIILWYIRVLDIFGVN) traverse the membrane as a helical segment. Topologically, residues 997–1008 (KYLGPYVMMIGK) are extracellular. Residues 1009–1029 (MMIDMLYFVVIMLVVLMSFGV) traverse the membrane as a helical segment. Residues 1030 to 1107 (ARQAILHPEE…CIPGAWLTPA (78 aa)) are Cytoplasmic-facing. Residues 1108-1128 (LMACYLLVANILLVNLLIAVF) form a helical membrane-spanning segment. The N-linked (GlcNAc...) asparagine glycan is linked to asparagine 1129. Residues 1129–1158 (NNTFFEVKSISNQVWKFQRYQLIMTFHDRP) are Extracellular-facing. The helical transmembrane segment at 1159–1179 (VLPPPMIILSHIYIIVMRLSG) threads the bilayer. Residues 1180–1630 (RCRKKREGDQ…QEKGNPETEC (451 aa)) are Cytoplasmic-facing. Positions 1235-1255 (IRVTSERVENMSMRLEEINER) form a coiled coil. Disordered stretches follow at residues 1362-1414 (EDVK…AGEL) and 1575-1630 (CLRS…ETEC).

Belongs to the transient receptor (TC 1.A.4) family. LTrpC subfamily. TRPM1 sub-subfamily. As to quaternary structure, interacts with TRPM3; the interaction results in the formation of a heteromultimeric cation channel complex that are functionally different from the homomeric channels. Interacts with GPR179. Associates with both guanine nucleotide-binding proteins G(o) and beta-gamma G protein dimer; implicated in directly regulating TRPM1 channel open-state.

The protein localises to the cell membrane. It localises to the endoplasmic reticulum membrane. It is found in the cell projection. Its subcellular location is the axon. The enzyme catalyses Ca(2+)(in) = Ca(2+)(out). The catalysed reaction is Mg(2+)(in) = Mg(2+)(out). It carries out the reaction Mn(2+)(in) = Mn(2+)(out). It catalyses the reaction Ni(2+)(in) = Ni(2+)(out). With respect to regulation, inhibited by extracellular zinc ions. Inhibited by intracellular Mg(2+). Activated by the neuroactive steroid pregnenolone sulfate. Negatively regulated by activation of GRM6 receptors in the ON-bipolar cells. Constitutively open nonselective divalent cation-conducting channels which mediate the influx of Ca(2+), Mg(2+), Mn(2+), Ba(2+), and Ni(2+) into the cytoplasm, leading to membrane depolarization. Impermeable to zinc ions. In addition, forms heteromultimeric ion channels with TRPM3 which are permeable for calcium and zinc ions. Plays an essential role for the depolarizing photoresponse of retinal ON bipolar cells. In the dark, tonic release of glutamate activates the G-protein coupled receptor for glutamate GRM6, its activation induces the release of G(o) protein and the beta-gamma G protein dimer. Both subunits can interact and inactivate the TRPM1 channel. A light onset, induces decrease in glutamate release and deactivation of GRM6 leading to channel opening and membrane depolarization. May play a role in metastasis suppression. This Rattus norvegicus (Rat) protein is Transient receptor potential cation channel subfamily M member 1.